The primary structure comprises 424 residues: Histidinol dehydrogenase (424 aa).

Positions 124, 186, and 209 each coordinate NAD(+). Substrate-binding residues include S232, Q254, and H257. Q254 and H257 together coordinate Zn(2+). Catalysis depends on proton acceptor residues E322 and H323. Residues H323, D356, E410, and H415 each coordinate substrate. D356 contacts Zn(2+). Residue H415 coordinates Zn(2+).

It belongs to the histidinol dehydrogenase family. Zn(2+) is required as a cofactor.

It catalyses the reaction L-histidinol + 2 NAD(+) + H2O = L-histidine + 2 NADH + 3 H(+). The protein operates within amino-acid biosynthesis; L-histidine biosynthesis; L-histidine from 5-phospho-alpha-D-ribose 1-diphosphate: step 9/9. Functionally, catalyzes the sequential NAD-dependent oxidations of L-histidinol to L-histidinaldehyde and then to L-histidine. The sequence is that of Histidinol dehydrogenase from Moorella thermoacetica (strain ATCC 39073 / JCM 9320).